A 393-amino-acid polypeptide reads, in one-letter code: MAFHNNHFNHFTDQQQHQPPPPPQQQQQQHFQESAPPNWLLRSDNNFLNLHTAASAAATSSDSPSSAAANQWLSRSSSFLQRGNTANNNNNETSGDVIEDVPGGEESMIGEKKEAERWQNARHKAEILSHPLYEQLLSAHVACLRIATPVDQLPRIDAQLAQSQNVVAKYSTLEAAQGLLAGDDKELDHFMTHYVLLLCSFKEQLQQHVRVHAMEAVMACWEIEQSLQSFTGVSPGEGTGATMSEDEDEQVESDAHLFDGSLDGLGFGPLVPTESERSLMERVRQELKHELKQGYKEKIVDIREEILRKRRAGKLPGDTTSVLKSWWQSHSKWPYPTEEDKARLVQETGLQLKQINNWFINQRKRNWHSNPSSSTVSKNKRRSNAGENSGRDR.

Over residues Met1–Asp13 the composition is skewed to polar residues. Disordered stretches follow at residues Met1–Trp39 and Gln81–Glu114. The ELK domain maps to Glu286–Ile306. A DNA-binding region (homeobox; TALE-type) is located at residues Leu307–Asn370. The interval Arg363–Arg393 is disordered. The segment covering His368–Ser377 has biased composition (polar residues).

The protein belongs to the TALE/KNOX homeobox family. May form heterodimeric complex with the TALE/BELL proteins. Interacts with OFP1, OFP2, OFP4 and OFP12. Interacts with KNATM-B.

Its subcellular location is the nucleus. This is Homeobox protein knotted-1-like 4 (KNAT4) from Arabidopsis thaliana (Mouse-ear cress).